Reading from the N-terminus, the 525-residue chain is GMP synthase [glutamine-hydrolyzing] (525 aa).

The region spanning 8–207 is the Glutamine amidotransferase type-1 domain; sequence KILILDFGSQ…ALDICGCKAN (200 aa). Cysteine 85 (nucleophile) is an active-site residue. Residues histidine 181 and glutamate 183 contribute to the active site. Residues 208–400 enclose the GMPS ATP-PPase domain; it reads WKPSSIIEDA…LGLPYNMLYR (193 aa). An ATP-binding site is contributed by 235-241; it reads SGGVDSS.

In terms of assembly, homodimer.

The catalysed reaction is XMP + L-glutamine + ATP + H2O = GMP + L-glutamate + AMP + diphosphate + 2 H(+). The protein operates within purine metabolism; GMP biosynthesis; GMP from XMP (L-Gln route): step 1/1. In terms of biological role, catalyzes the synthesis of GMP from XMP. The protein is GMP synthase [glutamine-hydrolyzing] of Shewanella frigidimarina (strain NCIMB 400).